A 428-amino-acid polypeptide reads, in one-letter code: GTPase Obg (428 aa).

The region spanning methionine 1 to leucine 158 is the Obg domain. An OBG-type G domain is found at alanine 159 to lysine 333. Residues glycine 165 to serine 172, phenylalanine 190 to valine 194, aspartate 212 to glycine 215, threonine 282 to aspartate 285, and serine 314 to leucine 316 contribute to the GTP site. 2 residues coordinate Mg(2+): serine 172 and threonine 192. The 79-residue stretch at tyrosine 350–glutamate 428 folds into the OCT domain.

The protein belongs to the TRAFAC class OBG-HflX-like GTPase superfamily. OBG GTPase family. In terms of assembly, monomer. It depends on Mg(2+) as a cofactor.

The protein localises to the cytoplasm. Its function is as follows. An essential GTPase which binds GTP, GDP and possibly (p)ppGpp with moderate affinity, with high nucleotide exchange rates and a fairly low GTP hydrolysis rate. Plays a role in control of the cell cycle, stress response, ribosome biogenesis and in those bacteria that undergo differentiation, in morphogenesis control. The protein is GTPase Obg of Lacticaseibacillus casei (strain BL23) (Lactobacillus casei).